Consider the following 1457-residue polypeptide: Ras guanine nucleotide exchange factor C (1457 aa).

Residues 1–55 (MSVFTFGHGSNGALGLGKITDDTCPTPQKVNYFTEIDKRVKKVACGSYHTVFVTD) form an RCC1 1 repeat. Disordered stretches follow at residues 75–196 (FYTS…PLLN), 209–264 (HYES…RINK), 282–313 (EQQQ…DEDP), and 376–404 (QQQL…SLQT). Low complexity-rich tracts occupy residues 83-121 (TTTT…KIVN) and 134-158 (SNTT…LPPT). Composition is skewed to basic and acidic residues over residues 171 to 188 (IKLD…ELIQ) and 209 to 224 (HYES…KDNE). Positions 225-237 (NENEEDEDDDDDD) are enriched in acidic residues. Basic and acidic residues predominate over residues 238–249 (STIRQNEDKESS). Composition is skewed to low complexity over residues 283 to 292 (QQQQPQQPQQ) and 376 to 403 (QQQL…SSLQ). RCC1 repeat units lie at residues 351 to 401 (GGNV…SSSS), 432 to 483 (WGEL…CYTE), 485 to 549 (GKMY…VLTQ), and 590 to 647 (SGEV…ALVE). The DH domain occupies 650–971 (PKTKLALQLV…QVLLERMNQN (322 aa)). Over residues 703 to 715 (LPPSLKGLSGGLP) the composition is skewed to low complexity. The interval 703-762 (LPPSLKGLSGGLPDNANNTIKNGKDKDNHHNGDSNGHHSNGHYHGNGNNGNNSITTSNSI) is disordered. Positions 724-738 (NGKDKDNHHNGDSNG) are enriched in basic and acidic residues. Positions 739–762 (HHSNGHYHGNGNNGNNSITTSNSI) are enriched in low complexity. In terms of domain architecture, N-terminal Ras-GEF spans 989–1109 (GNPQIMGGSL…SVSQIKLQYF (121 aa)). Residues 1127–1210 (LTQNEITTPP…NNNNNNNNLT (84 aa)) are disordered. Positions 1138 to 1211 (LQIQNNNQNN…NNNNNNNLTN (74 aa)) form a coiled coil. Over residues 1142–1210 (NNNQNNNLEN…NNNNNNNNLT (69 aa)) the composition is skewed to low complexity. The region spanning 1232-1454 (QPIEVAQTLT…DDKQAQKISS (223 aa)) is the Ras-GEF domain.

Promotes the exchange of Ras-bound GDP by GTP. The sequence is that of Ras guanine nucleotide exchange factor C (gefC) from Dictyostelium discoideum (Social amoeba).